Reading from the N-terminus, the 391-residue chain is 4-coumarate--CoA ligase (391 aa).

It belongs to the ATP-dependent AMP-binding enzyme family.

The catalysed reaction is (E)-4-coumarate + ATP + CoA = (E)-4-coumaroyl-CoA + AMP + diphosphate. Converts p-coumaric acid into p-coumaryl CoA. This is necessary for the activation of the photoactive yellow protein (PYP) chromophore. This is 4-coumarate--CoA ligase (pcl) from Halorhodospira halophila (Ectothiorhodospira halophila).